A 1845-amino-acid chain; its full sequence is Histone-lysine N-methyltransferase, H3 lysine-79 specific (1845 aa).

Positions 1–44 (MSTNSTPRKQKLSNSKSLQNSPISPTVKKTNSFPLGNNIPTNIN) are enriched in polar residues. Disordered regions lie at residues 1–67 (MSTN…NGIG), 83–306 (PPLP…NKWT), 450–470 (SHDI…NKNK), 486–571 (QKLK…TERK), 585–681 (RKER…NDSY), 741–767 (GETF…KKIE), 862–881 (QTTK…AETE), and 963–1102 (KDNP…SNSL). 4 stretches are compositionally biased toward low complexity: residues 52 to 67 (NNSN…NGIG), 90 to 162 (SSSS…QQEP), 191 to 226 (PSTP…SNNS), and 239 to 263 (NNNN…NNNN). A compositionally biased stretch (acidic residues) spans 268–280 (VIDDDDDDDDDEG). The segment covering 282-294 (SIKSTHTSTQSTP) has biased composition (polar residues). Positions 295 to 304 (IRDRRQRDNK) are enriched in basic and acidic residues. Residues 453-464 (INNNNNNNNNNK) show a composition bias toward low complexity. Residues 585 to 679 (RKERERKERK…IEKERREKND (95 aa)) show a composition bias toward basic and acidic residues. The segment at 625–639 (KKKEKEKEKEKEKEK) is required for interaction with nucleosomes and DNA. Composition is skewed to low complexity over residues 750-763 (NNNN…NNNN), 862-877 (QTTK…TTTT), 972-1011 (NNNR…RNNN), and 1020-1067 (NNNN…NNTI). Residues 1069–1080 (KKIETIKKDINK) show a composition bias toward basic and acidic residues. A compositionally biased stretch (low complexity) spans 1084 to 1102 (KTTTTTSSSSSSTSSSNSL). Positions 1125 to 1446 (FDVGIGVPVT…KDSDIVTDQT (322 aa)) constitute a DOT1 domain. S-adenosyl-L-methionine contacts are provided by residues 1251–1254 (YGEA), 1274–1283 (FCDIGCGIGN), and Glu-1300. 5 disordered regions span residues 1463–1559 (LQLF…NKPI), 1610–1661 (RISP…SSND), 1735–1762 (HQKS…KKEQ), 1772–1791 (NYNN…NHNN), and 1799–1845 (TDLI…DNNK). 3 stretches are compositionally biased toward low complexity: residues 1467–1522 (SSSS…TPNS), 1541–1556 (NNNN…NSNN), and 1610–1642 (RISP…SSSD). Residues 1643–1656 (NENDDDNGDDEDDS) show a composition bias toward acidic residues. A compositionally biased stretch (basic residues) spans 1745–1759 (RLSRKQKKLAKKNKK). Composition is skewed to low complexity over residues 1799–1817 (TDLI…INND) and 1835–1845 (KDYNNINDNNK).

The protein belongs to the class I-like SAM-binding methyltransferase superfamily. DOT1 family.

The protein resides in the nucleus. It carries out the reaction L-lysyl(79)-[histone H3] + 3 S-adenosyl-L-methionine = N(6),N(6),N(6)-trimethyl-L-lysyl(79)-[histone H3] + 3 S-adenosyl-L-homocysteine + 3 H(+). Histone methyltransferase that specifically methylates histone H3 to form H3K79me. This methylation is required for telomere silencing, correct growth and development, and for resistance to DNA damage induced by UV LIGHT. This Dictyostelium discoideum (Social amoeba) protein is Histone-lysine N-methyltransferase, H3 lysine-79 specific.